A 310-amino-acid polypeptide reads, in one-letter code: Glutaminase (310 aa).

Residues serine 66, asparagine 117, glutamate 161, asparagine 168, tyrosine 192, tyrosine 244, and valine 262 each contribute to the substrate site.

Belongs to the glutaminase family. Homotetramer.

It catalyses the reaction L-glutamine + H2O = L-glutamate + NH4(+). In Shigella boydii serotype 4 (strain Sb227), this protein is Glutaminase.